We begin with the raw amino-acid sequence, 199 residues long: MNSIVYTTKTQHAVMGLRASLALLFVCGVVYTGTVTQLGGALFPAQAKGSVIHRDNVAMGSEFIAQPFVNPAYFYSRPSAVDYDPMATGGSNLAPSNPALRERVMATSQEIQARESVQAADIPVDLLATSGAGLDPHISPAAAKLQVARVAQARQLAEPQVLTLVAQFIEPPQWGIFGQARVNVLKLNLALDQIAKHAQ.

Residues 21 to 43 (LALLFVCGVVYTGTVTQLGGALF) form a helical membrane-spanning segment.

Belongs to the KdpC family. The system is composed of three essential subunits: KdpA, KdpB and KdpC.

Its subcellular location is the cell inner membrane. Part of the high-affinity ATP-driven potassium transport (or Kdp) system, which catalyzes the hydrolysis of ATP coupled with the electrogenic transport of potassium into the cytoplasm. This subunit acts as a catalytic chaperone that increases the ATP-binding affinity of the ATP-hydrolyzing subunit KdpB by the formation of a transient KdpB/KdpC/ATP ternary complex. The polypeptide is Potassium-transporting ATPase KdpC subunit (Shewanella putrefaciens (strain CN-32 / ATCC BAA-453)).